The sequence spans 277 residues: Carbonyl reductase [NADPH] 1 (277 aa).

Residue Ser-2 is modified to N-acetylserine. Phosphoserine occurs at positions 2 and 30. NADP(+) contacts are provided by residues 10-34 (VTGANKGIGFAITRDLCRKFSGDVV), 63-64 (DI), and Asn-90. Residues 95 to 97 (FKV) and Gln-106 each bind glutathione. Residue Ser-140 participates in substrate binding. A glutathione-binding site is contributed by 193-194 (AY). The active-site Proton acceptor is Tyr-194. NADP(+) is bound by residues 194–198 (YGVTK) and 231–233 (VRT). N6-1-carboxyethyl lysine is present on Lys-239. A disordered region spans residues 258 to 277 (PPDAEGPHGQFVQDKKVEPW).

It belongs to the short-chain dehydrogenases/reductases (SDR) family. As to quaternary structure, monomer.

It is found in the cytoplasm. The catalysed reaction is a secondary alcohol + NADP(+) = a ketone + NADPH + H(+). It catalyses the reaction prostaglandin F2alpha + NADP(+) = prostaglandin E2 + NADPH + H(+). The enzyme catalyses prostaglandin E1 + NADP(+) = 15-oxoprostaglandin E1 + NADPH + H(+). It carries out the reaction menadione + NADPH + H(+) = menadiol + NADP(+). The catalysed reaction is prostaglandin D2 + NADP(+) = 15-oxoprostaglandin D2 + NADPH + H(+). It catalyses the reaction prostaglandin E2 + NADP(+) = 15-oxoprostaglandin E2 + NADPH + H(+). The enzyme catalyses prostaglandin F2alpha + NADP(+) = 15-oxoprostaglandin F2alpha + NADPH + H(+). It carries out the reaction daunorubicin + NADPH + H(+) = 13-dihydrodaunorubicin + NADP(+). The catalysed reaction is S-nitrosoglutathione + NADPH + H(+) = S-(hydroxysulfenamide)glutathione + NADP(+). It catalyses the reaction corticosterone + NADPH + H(+) = 20beta-dihydrocorticosterone + NADP(+). The enzyme catalyses a primary alcohol + NADP(+) = an aldehyde + NADPH + H(+). It carries out the reaction cortisol + NADPH + H(+) = 20beta-dihydrocortisol + NADP(+). Its function is as follows. NADPH-dependent reductase with broad substrate specificity. Catalyzes the reduction of a wide variety of carbonyl compounds including quinones, prostaglandins, menadione, plus various xenobiotics. Catalyzes the reduction of the antitumor anthracyclines doxorubicin and daunorubicin to the cardiotoxic compounds doxorubicinol and daunorubicinol. Can convert prostaglandin E to prostaglandin F2-alpha. Can bind glutathione, which explains its higher affinity for glutathione-conjugated substrates. Catalyzes the reduction of S-nitrosoglutathione. In addition, participates in the glucocorticoid metabolism by catalyzing the NADPH-dependent cortisol/corticosterone into 20beta-dihydrocortisol (20b-DHF) or 20beta-corticosterone (20b-DHB), which are weak agonists of NR3C1 and NR3C2 in adipose tissue. This is Carbonyl reductase [NADPH] 1 from Mus musculus (Mouse).